A 377-amino-acid chain; its full sequence is T-protein (377 aa).

The region spanning 1–92 is the Chorismate mutase domain; the sequence is MSFMEALKDL…ESYANENQFG (92 aa). Positions 101-364 constitute a Prephenate/arogenate dehydrogenase domain; the sequence is HKIVIVGGYG…DYSEQFLKES (264 aa).

In the C-terminal section; belongs to the prephenate/arogenate dehydrogenase family.

The protein localises to the cytoplasm. It carries out the reaction chorismate = prephenate. The catalysed reaction is prephenate + NAD(+) = 3-(4-hydroxyphenyl)pyruvate + CO2 + NADH. It participates in amino-acid biosynthesis; L-tyrosine biosynthesis; (4-hydroxyphenyl)pyruvate from prephenate (NAD(+) route): step 1/1. Its pathway is metabolic intermediate biosynthesis; prephenate biosynthesis; prephenate from chorismate: step 1/1. This chain is T-protein (tyrA), found in Haemophilus influenzae (strain ATCC 51907 / DSM 11121 / KW20 / Rd).